We begin with the raw amino-acid sequence, 747 residues long: Protein tyrosine phosphatase domain-containing protein 1 (747 aa).

The interval Met1 to Lys36 is disordered. Residues Asp11–Gly21 show a composition bias toward polar residues. Positions Tyr82–Cys253 constitute a Tyrosine-protein phosphatase domain. The Phosphocysteine intermediate role is filled by Cys190. Phosphoserine is present on residues Ser392, Ser394, and Ser543. Positions Ser549–Ala570 are disordered.

The protein belongs to the protein-tyrosine phosphatase family. Non-receptor class PTPDC1 subfamily.

Its function is as follows. May play roles in cilia formation and/or maintenance. The chain is Protein tyrosine phosphatase domain-containing protein 1 (Ptpdc1) from Mus musculus (Mouse).